Here is a 464-residue protein sequence, read N- to C-terminus: GTPase Der (464 aa).

EngA-type G domains follow at residues 3–166 and 177–350; these read ALVA…PVLE and LQFA…QSAN. Residues 9 to 16, 56 to 60, 118 to 121, 183 to 190, 230 to 234, and 295 to 298 contribute to the GTP site; these read GRPNVGKS, DTGGV, NKAE, DTAGI, and NKWD. The KH-like domain occupies 351–435; the sequence is SHLPTGELNR…PIALEFRTVK (85 aa).

It belongs to the TRAFAC class TrmE-Era-EngA-EngB-Septin-like GTPase superfamily. EngA (Der) GTPase family. As to quaternary structure, associates with the 50S ribosomal subunit.

Functionally, GTPase that plays an essential role in the late steps of ribosome biogenesis. This chain is GTPase Der, found in Nitrosococcus oceani (strain ATCC 19707 / BCRC 17464 / JCM 30415 / NCIMB 11848 / C-107).